Here is a 379-residue protein sequence, read N- to C-terminus: Tubulin--tyrosine ligase (379 aa).

The TTL domain maps to 3–370; it reads TFVVRDENSS…PPDAEQQQQQ (368 aa).

It belongs to the tubulin--tyrosine ligase family. Monomer. Mg(2+) serves as cofactor. The cofactor is K(+).

It catalyses the reaction C-terminal L-alpha-aminoacyl-L-glutamyl-L-glutamyl-[tubulin] + L-tyrosine + ATP = C-terminal L-alpha-aminoacyl-L-glutamyl-L-glutamyl-L-tyrosyl-[tubulin] + ADP + phosphate + H(+). Functionally, catalyzes the post-translational addition of a tyrosine to the C-terminal end of detyrosinated alpha-tubulin. This is Tubulin--tyrosine ligase (TTL) from Sus scrofa (Pig).